The sequence spans 357 residues: LINE-1 retrotransposable element ORF1 protein (357 aa).

Residues 1–40 (MAKGKRKNPTNRNQDHSPSSERSTPTPPSPGHPNTTENLD) are disordered. A coiled-coil region spans residues 59-156 (HKSLKDLQES…IENIDTTVKE (98 aa)). The tract at residues 179–274 (NLRIIGIDEN…KGRPIRITPD (96 aa)) is RNA recognition motif (RRM) domain. The C-terminal domain (CTD) stretch occupies residues 278-339 (ETMKARRAWT…STNPALQRII (62 aa)).

It belongs to the transposase 22 family. Homotrimer (via coiled coil domain). May also form larger homooligomers. Interacts with Tex19.1 and UBR2. Interacts with MOV10. In terms of processing, polyubiquitinated, probably by UBR2, which induces its degradation. In terms of tissue distribution, expressed in meiotic spermatocytes and in the cerebellum (at protein level).

Its subcellular location is the nucleus. It is found in the nucleolus. The protein localises to the cytoplasm. The protein resides in the cytoplasmic ribonucleoprotein granule. It localises to the stress granule. In terms of biological role, nucleic acid-binding protein which is essential for retrotransposition of LINE-1 elements in the genome. Functions as a nucleic acid chaperone binding its own transcript and therefore preferentially mobilizing the transcript from which they are encoded. The chain is LINE-1 retrotransposable element ORF1 protein from Mus musculus (Mouse).